Here is a 422-residue protein sequence, read N- to C-terminus: Tyrosine-protein kinase STYK1 (422 aa).

A helical membrane pass occupies residues 26 to 46 (VIIVPTLLVTIFLILLGVILW). Residues 114-384 (SEVLEQICSG…ELRLRLEAAI (271 aa)) enclose the Protein kinase domain. ATP-binding positions include 120–128 (ICSGSCGPI) and Lys-147. The active-site Proton acceptor is the Asp-251.

This sequence belongs to the protein kinase superfamily. Tyr protein kinase family. In terms of tissue distribution, widely expressed. Highly expressed in brain, placenta and prostate. Expressed in tumor cells such as hepatoma cells L-02, cervix carcinoma cells HeLa, ovary cancer cells Ho8910 and chronic myelogenous leukemia cells K-562, but not in other tumor cells such as epidermoid carcinoma (A-431). Undetectable in most normal lung tissues, widely expressed in lung cancers.

It is found in the membrane. It catalyses the reaction L-tyrosyl-[protein] + ATP = O-phospho-L-tyrosyl-[protein] + ADP + H(+). Its function is as follows. Probable tyrosine protein-kinase, which has strong transforming capabilities on a variety of cell lines. When overexpressed, it can also induce tumor cell invasion as well as metastasis in distant organs. May act by activating both MAP kinase and phosphatidylinositol 3'-kinases (PI3K) pathways. The chain is Tyrosine-protein kinase STYK1 (STYK1) from Homo sapiens (Human).